The chain runs to 150 residues: MHGCNCNRVSGHLSAVRSSGLENGPFGPSGFGPSMWFTMHSGAAERAIRGGYLTENEKAAWESWLRNLWVCIPCESCRRHYMGIVNAVDFGSVNTGDKVFRLTVDIHNMVNARLNKPHVTLQKAICIYGLDTKLGPASTITFRANTSTFN.

In terms of domain architecture, ERV/ALR sulfhydryl oxidase spans 24–128 (GPFGPSGFGP…VTLQKAICIY (105 aa)). The cysteines at positions 74 and 77 are disulfide-linked.

Requires FAD as cofactor.

The enzyme catalyses 2 R'C(R)SH + O2 = R'C(R)S-S(R)CR' + H2O2. FAD-dependent sulfhydryl oxidase that catalyzes disulfide bond formation. This Dryophytes versicolor (chameleon treefrog) protein is Putative FAD-linked sulfhydryl oxidase 088R.